The sequence spans 245 residues: Ureidoacrylate amidohydrolase RutB (245 aa).

The Proton acceptor role is filled by aspartate 41. Lysine 150 is a catalytic residue. Cysteine 183 serves as the catalytic Nucleophile.

Belongs to the isochorismatase family. RutB subfamily.

The enzyme catalyses (Z)-3-ureidoacrylate + H2O + H(+) = (Z)-3-aminoacrylate + NH4(+) + CO2. It carries out the reaction (Z)-3-ureidoacrylate + H2O = (Z)-3-aminoacrylate + carbamate + H(+). It catalyses the reaction (Z)-2-methylureidoacrylate + H2O + H(+) = (Z)-2-methylaminoacrylate + NH4(+) + CO2. Hydrolyzes ureidoacrylate to form aminoacrylate and carbamate. The carbamate hydrolyzes spontaneously, thereby releasing one of the nitrogen atoms of the pyrimidine ring as ammonia and one of its carbon atoms as CO2. This is Ureidoacrylate amidohydrolase RutB from Pseudomonas syringae pv. syringae (strain B728a).